Reading from the N-terminus, the 386-residue chain is MGDDGFLDQYPANTDAGIGTVHSCRYSKQKNPVQNNDFLSCSMCIHNGPIKLYGIFSGFNGGDSTAKFVMNRLVYEIFGENPITPTLLPYQVVEEFKRKFENVAERYLLMNTDDLNNRLLKLEEQSETGNNAVSEINQKIRQGTTAIVVMIINQDLYVLNCGNSLAIAMNSENVVQLNSNLHNNDNPLEIVRIKGLGINPETVLNPTRAIGDLQRTHLFEETEAFKNAKGPPVISTPDVQYTKIDPSWRHLVLISDGVVQNLKEVEVENIPTEVSVRLIEDHTVTSTAQALVDSFARKHRDAYTMSDDKNFCISNHREEMTVIYVKLEEDYQAALYEQFDSAISTMESTNATLYEPCSTPYVDATNFNSGKNYEKMKKLLLTRPSK.

Residues 22–327 (HSCRYSKQKN…EEMTVIYVKL (306 aa)) enclose the PPM-type phosphatase domain.

Interacts with mom-4; the interaction enhances mom-4 kinase activity.

In terms of biological role, involved in the Wnt signaling pathway by regulating mom-4 kinase activity. This is TGF-beta-activated kinase 1 and MAP3K7-binding protein 1 from Caenorhabditis elegans.